Reading from the N-terminus, the 336-residue chain is MPKTETYPRLLADIGGTNARFGLEVAPRQIECIEVLRCEDFESLSDAVRFYLSKCKESLKLHPIYGSFAVATPIMGDFVQMTNNHWTFSIETTRQCLTLKKLLVINDFVAQAYAISAMQENDLAQIGGIKCEINAPKAILGPGTGLGVSTLIQNSDGSLKVLPGEGGHVSFAPFDDLEILVWQYARSKFNHVSAERFLSGSGLVLIYEALSKRKGLEKVAKLSKAELTPQIISECALNGDYPICRLTLDTFCSMLGTLAADVALTLGARGGVYLCGGIIPRFIDYFKTSPFRARFETKGRMGAFLASIPVHVVLKKTPGLDGAGIALENYLLHDKI.

ATP is bound at residue 12–17 (ADIGGT).

This sequence belongs to the bacterial glucokinase family.

It is found in the cytoplasm. It carries out the reaction D-glucose + ATP = D-glucose 6-phosphate + ADP + H(+). The chain is Glucokinase from Helicobacter pylori (strain ATCC 700392 / 26695) (Campylobacter pylori).